The following is a 352-amino-acid chain: Peptide chain release factor 1 (352 aa).

An N5-methylglutamine modification is found at Gln233. Residues 288–309 (NAKDRKEQVGSGDRSERIRTYN) are disordered. Residues 289 to 306 (AKDRKEQVGSGDRSERIR) show a composition bias toward basic and acidic residues.

This sequence belongs to the prokaryotic/mitochondrial release factor family. Post-translationally, methylated by PrmC. Methylation increases the termination efficiency of RF1.

The protein resides in the cytoplasm. In terms of biological role, peptide chain release factor 1 directs the termination of translation in response to the peptide chain termination codons UAG and UAA. This Helicobacter pylori (strain ATCC 700392 / 26695) (Campylobacter pylori) protein is Peptide chain release factor 1 (prfA).